We begin with the raw amino-acid sequence, 37 residues long: Large ribosomal subunit protein bL36c (37 aa).

It belongs to the bacterial ribosomal protein bL36 family.

It localises to the plastid. The protein localises to the chloroplast. The polypeptide is Large ribosomal subunit protein bL36c (Lepidium virginicum (Virginia pepperweed)).